A 139-amino-acid polypeptide reads, in one-letter code: ATP synthase epsilon chain (139 aa).

Belongs to the ATPase epsilon chain family. In terms of assembly, F-type ATPases have 2 components, CF(1) - the catalytic core - and CF(0) - the membrane proton channel. CF(1) has five subunits: alpha(3), beta(3), gamma(1), delta(1), epsilon(1). CF(0) has three main subunits: a, b and c.

The protein resides in the cell inner membrane. Its function is as follows. Produces ATP from ADP in the presence of a proton gradient across the membrane. This is ATP synthase epsilon chain from Alcanivorax borkumensis (strain ATCC 700651 / DSM 11573 / NCIMB 13689 / SK2).